Reading from the N-terminus, the 435-residue chain is Eukaryotic peptide chain release factor subunit 1 (435 aa).

The protein belongs to the eukaryotic release factor 1 family. As to quaternary structure, heterodimer of two subunits, one of which binds GTP.

The protein resides in the cytoplasm. Its function is as follows. Directs the termination of nascent peptide synthesis (translation) in response to the termination codons UAA, UAG and UGA. The protein is Eukaryotic peptide chain release factor subunit 1 (ERF1) of Polyandrocarpa misakiensis (Tunicate).